The chain runs to 360 residues: Aminomethyltransferase (360 aa).

This sequence belongs to the GcvT family. The glycine cleavage system is composed of four proteins: P, T, L and H.

It catalyses the reaction N(6)-[(R)-S(8)-aminomethyldihydrolipoyl]-L-lysyl-[protein] + (6S)-5,6,7,8-tetrahydrofolate = N(6)-[(R)-dihydrolipoyl]-L-lysyl-[protein] + (6R)-5,10-methylene-5,6,7,8-tetrahydrofolate + NH4(+). The glycine cleavage system catalyzes the degradation of glycine. This Legionella pneumophila (strain Paris) protein is Aminomethyltransferase.